The following is a 20-amino-acid chain: Unknown protein NF015 from 2D-PAGE (20 aa).

The segment at 1-20 (TPQIQKPAPQFSKTALLPDE) is disordered.

This is Unknown protein NF015 from 2D-PAGE from Naegleria fowleri (Brain eating amoeba).